A 354-amino-acid chain; its full sequence is Phosphatidylserine decarboxylase proenzyme (354 aa).

A helical transmembrane segment spans residues 18–36 (YLITGVTILSFILMFQYKY). Active-site charge relay system; for autoendoproteolytic cleavage activity residues include Asp139, His198, and Ser308. Ser308 functions as the Schiff-base intermediate with substrate; via pyruvic acid; for decarboxylase activity in the catalytic mechanism. At Ser308 the chain carries Pyruvic acid (Ser); by autocatalysis.

The protein belongs to the phosphatidylserine decarboxylase family. PSD-B subfamily. Eukaryotic type I sub-subfamily. In terms of assembly, heterodimer of a large membrane-associated beta subunit and a small pyruvoyl-containing alpha subunit. Pyruvate is required as a cofactor. In terms of processing, is synthesized initially as an inactive proenzyme. Formation of the active enzyme involves a self-maturation process in which the active site pyruvoyl group is generated from an internal serine residue via an autocatalytic post-translational modification. Two non-identical subunits are generated from the proenzyme in this reaction, and the pyruvate is formed at the N-terminus of the alpha chain, which is derived from the carboxyl end of the proenzyme. The autoendoproteolytic cleavage occurs by a canonical serine protease mechanism, in which the side chain hydroxyl group of the serine supplies its oxygen atom to form the C-terminus of the beta chain, while the remainder of the serine residue undergoes an oxidative deamination to produce ammonia and the pyruvoyl prosthetic group on the alpha chain. During this reaction, the Ser that is part of the protease active site of the proenzyme becomes the pyruvoyl prosthetic group, which constitutes an essential element of the active site of the mature decarboxylase.

It is found in the membrane. Its subcellular location is the endoplasmic reticulum membrane. The catalysed reaction is a 1,2-diacyl-sn-glycero-3-phospho-L-serine + H(+) = a 1,2-diacyl-sn-glycero-3-phosphoethanolamine + CO2. It functions in the pathway phospholipid metabolism; phosphatidylethanolamine biosynthesis; phosphatidylethanolamine from CDP-diacylglycerol: step 2/2. Protease activity is inhibited by PMSF. Its function is as follows. Catalyzes the formation of phosphatidylethanolamine (PtdEtn) from phosphatidylserine (PtdSer). Plays a central role in phospholipid metabolism and in the interorganelle trafficking of phosphatidylserine. The sequence is that of Phosphatidylserine decarboxylase proenzyme from Plasmodium knowlesi (strain H).